Consider the following 320-residue polypeptide: 2-oxoglutarate-dependent dioxygenase thnC (320 aa).

Residues 174 to 278 (PLVQMKLIRY…HSCATFWHGD (105 aa)) enclose the Fe2OG dioxygenase domain. Positions 199, 201, and 258 each coordinate Fe cation. Arg-268 is a 2-oxoglutarate binding site.

This sequence belongs to the iron/ascorbate-dependent oxidoreductase family. The cofactor is Fe(2+).

The catalysed reaction is trihazone A + 2-oxoglutarate + O2 + H(+) = trihazone D + succinate + 2 CO2 + H2O. Its pathway is secondary metabolite biosynthesis. In terms of biological role, 2-oxoglutarate-dependent dioxygenase; part of the gene cluster that produces the tetronate natural products trihazones. ThnC catalyzes the oxidative decarboxylation of trihazone A to trihazone D. The C4 hydrogen is first abstracted by the iron-oxo species generated in ThnC to give a tertiary radical at C4. This is followed by decarboxylation and removal of the second electron by the FeIII-OH center to give trihazone D. The pathway begins with the formation of trihazone A by the hybrid PKS-NRPS synthetase thnA and the trans-enoyl reductase thnE. Trihazone A is further decarboxylated by the 2-oxoglutarate-dependent dioxygenase thnC to produce trihazone D. The function of the FAD-dependent monooxygenase thnD has still to be identified. The sequence is that of 2-oxoglutarate-dependent dioxygenase thnC from Trichoderma harzianum (Hypocrea lixii).